Here is a 207-residue protein sequence, read N- to C-terminus: ATP-dependent Clp protease proteolytic subunit 2 (207 aa).

Serine 102 functions as the Nucleophile in the catalytic mechanism. The active site involves histidine 127.

It belongs to the peptidase S14 family. As to quaternary structure, fourteen ClpP subunits assemble into 2 heptameric rings which stack back to back to give a disk-like structure with a central cavity, resembling the structure of eukaryotic proteasomes.

It localises to the cytoplasm. It carries out the reaction Hydrolysis of proteins to small peptides in the presence of ATP and magnesium. alpha-casein is the usual test substrate. In the absence of ATP, only oligopeptides shorter than five residues are hydrolyzed (such as succinyl-Leu-Tyr-|-NHMec, and Leu-Tyr-Leu-|-Tyr-Trp, in which cleavage of the -Tyr-|-Leu- and -Tyr-|-Trp bonds also occurs).. Its function is as follows. Cleaves peptides in various proteins in a process that requires ATP hydrolysis. Has a chymotrypsin-like activity. Plays a major role in the degradation of misfolded proteins. This chain is ATP-dependent Clp protease proteolytic subunit 2, found in Bifidobacterium longum (strain NCC 2705).